The following is a 430-amino-acid chain: 3-oxo-tetronate kinase (430 aa).

Residues S268, 366–369 (GGET), and G410 each bind ATP.

It belongs to the four-carbon acid sugar kinase family.

The catalysed reaction is 3-dehydro-L-erythronate + ATP = 3-dehydro-4-O-phospho-L-erythronate + ADP + H(+). The enzyme catalyses 3-dehydro-D-erythronate + ATP = 3-dehydro-4-O-phospho-D-erythronate + ADP + H(+). In terms of biological role, catalyzes the ATP-dependent phosphorylation of 3-oxo-tetronate to 3-oxo-tetronate 4-phosphate. This chain is 3-oxo-tetronate kinase, found in Pseudomonas fluorescens (strain ATCC BAA-477 / NRRL B-23932 / Pf-5).